We begin with the raw amino-acid sequence, 248 residues long: Probable transcriptional regulatory protein Pcar_2335 (248 aa).

It belongs to the TACO1 family.

Its subcellular location is the cytoplasm. This Syntrophotalea carbinolica (strain DSM 2380 / NBRC 103641 / GraBd1) (Pelobacter carbinolicus) protein is Probable transcriptional regulatory protein Pcar_2335.